The sequence spans 323 residues: Transaldolase (323 aa).

Catalysis depends on Lys-133, which acts as the Schiff-base intermediate with substrate.

This sequence belongs to the transaldolase family. Type 1 subfamily. As to quaternary structure, monomer.

It carries out the reaction D-sedoheptulose 7-phosphate + D-glyceraldehyde 3-phosphate = D-erythrose 4-phosphate + beta-D-fructose 6-phosphate. It functions in the pathway carbohydrate degradation; pentose phosphate pathway; D-glyceraldehyde 3-phosphate and beta-D-fructose 6-phosphate from D-ribose 5-phosphate and D-xylulose 5-phosphate (non-oxidative stage): step 2/3. Functionally, important for the balance of metabolites in the pentose-phosphate pathway. Involved in xylose fermentation to ethanol. The chain is Transaldolase from Gibberella intermedia (Bulb rot disease fungus).